The chain runs to 351 residues: UDP-N-acetylenolpyruvoylglucosamine reductase (351 aa).

The FAD-binding PCMH-type domain occupies 25 to 196; the sequence is HIQAQARWLL…TAVEFRLPLL (172 aa). The active site involves arginine 173. Serine 246 serves as the catalytic Proton donor. Glutamate 343 is a catalytic residue.

Belongs to the MurB family. FAD is required as a cofactor.

It localises to the cytoplasm. The catalysed reaction is UDP-N-acetyl-alpha-D-muramate + NADP(+) = UDP-N-acetyl-3-O-(1-carboxyvinyl)-alpha-D-glucosamine + NADPH + H(+). The protein operates within cell wall biogenesis; peptidoglycan biosynthesis. Functionally, cell wall formation. This is UDP-N-acetylenolpyruvoylglucosamine reductase from Xylella fastidiosa (strain M23).